A 161-amino-acid chain; its full sequence is uncharacterized protein (161 aa).

Residues 76-94 form a helical membrane-spanning segment; it reads ISISSQCIFNVVILSFVFT.

The protein resides in the membrane. This is an uncharacterized protein from Saccharomyces cerevisiae (strain ATCC 204508 / S288c) (Baker's yeast).